Here is a 333-residue protein sequence, read N- to C-terminus: Foldase protein PrsA (333 aa).

The N-terminal stretch at 1–22 (MKSAKQIATALLVGMFTFSAVG) is a signal peptide. The N-palmitoyl cysteine moiety is linked to residue C23. C23 carries the S-diacylglycerol cysteine lipid modification. The PpiC domain maps to 192–283 (PNTVHLAHIL…FGWHVIKCIK (92 aa)).

Belongs to the PrsA family.

Its subcellular location is the cell membrane. It carries out the reaction [protein]-peptidylproline (omega=180) = [protein]-peptidylproline (omega=0). Plays a major role in protein secretion by helping the post-translocational extracellular folding of several secreted proteins. This is Foldase protein PrsA from Clostridium acetobutylicum (strain ATCC 824 / DSM 792 / JCM 1419 / IAM 19013 / LMG 5710 / NBRC 13948 / NRRL B-527 / VKM B-1787 / 2291 / W).